Reading from the N-terminus, the 350-residue chain is Major allergen Mal f 1 (350 aa).

The signal sequence occupies residues 1–22 (MRYSTVLAALALLGTSAVSVLA).

The protein resides in the secreted. Its subcellular location is the cell wall. The protein is Major allergen Mal f 1 of Malassezia furfur (Pityriasis versicolor infection agent).